A 132-amino-acid polypeptide reads, in one-letter code: Keratin, high-sulfur matrix protein, IIIA3 (132 aa).

Its function is as follows. The keratin products of mammalian epidermal derivatives such as wool and hair consist of microfibrils embedded in a rigid matrix of other proteins. The matrix proteins include the high-sulfur and high-tyrosine keratins, having molecular weights of 6-20 kDa, whereas the microfibrils contain the larger, low-sulfur keratins (40-56 kDa). This Capra hircus (Goat) protein is Keratin, high-sulfur matrix protein, IIIA3.